We begin with the raw amino-acid sequence, 230 residues long: Ribosomal RNA small subunit methyltransferase G (230 aa).

S-adenosyl-L-methionine contacts are provided by residues glycine 80, phenylalanine 85, 131–132 (VE), and arginine 145.

The protein belongs to the methyltransferase superfamily. RNA methyltransferase RsmG family.

It is found in the cytoplasm. It carries out the reaction guanosine(527) in 16S rRNA + S-adenosyl-L-methionine = N(7)-methylguanosine(527) in 16S rRNA + S-adenosyl-L-homocysteine. Its function is as follows. Specifically methylates the N7 position of guanine in position 527 of 16S rRNA. This is Ribosomal RNA small subunit methyltransferase G from Novosphingobium aromaticivorans (strain ATCC 700278 / DSM 12444 / CCUG 56034 / CIP 105152 / NBRC 16084 / F199).